Reading from the N-terminus, the 73-residue chain is UPF0346 protein LVIS_0790 (73 aa).

The protein belongs to the UPF0346 family.

This is UPF0346 protein LVIS_0790 from Levilactobacillus brevis (strain ATCC 367 / BCRC 12310 / CIP 105137 / JCM 1170 / LMG 11437 / NCIMB 947 / NCTC 947) (Lactobacillus brevis).